The sequence spans 546 residues: Chaperonin GroEL (546 aa).

Residues 30-33 (TLGP), K51, 87-91 (DGTTT), G415, 479-481 (NAA), and D495 each bind ATP.

The protein belongs to the chaperonin (HSP60) family. As to quaternary structure, forms a cylinder of 14 subunits composed of two heptameric rings stacked back-to-back. Interacts with the co-chaperonin GroES.

The protein resides in the cytoplasm. The catalysed reaction is ATP + H2O + a folded polypeptide = ADP + phosphate + an unfolded polypeptide.. In terms of biological role, together with its co-chaperonin GroES, plays an essential role in assisting protein folding. The GroEL-GroES system forms a nano-cage that allows encapsulation of the non-native substrate proteins and provides a physical environment optimized to promote and accelerate protein folding. In Xanthomonas campestris pv. phaseoli, this protein is Chaperonin GroEL.